The chain runs to 226 residues: Enolase-phosphatase E1 (226 aa).

Belongs to the HAD-like hydrolase superfamily. MasA/MtnC family. As to quaternary structure, monomer. It depends on Mg(2+) as a cofactor.

The catalysed reaction is 5-methylsulfanyl-2,3-dioxopentyl phosphate + H2O = 1,2-dihydroxy-5-(methylsulfanyl)pent-1-en-3-one + phosphate. Its pathway is amino-acid biosynthesis; L-methionine biosynthesis via salvage pathway; L-methionine from S-methyl-5-thio-alpha-D-ribose 1-phosphate: step 3/6. The protein operates within amino-acid biosynthesis; L-methionine biosynthesis via salvage pathway; L-methionine from S-methyl-5-thio-alpha-D-ribose 1-phosphate: step 4/6. Bifunctional enzyme that catalyzes the enolization of 2,3-diketo-5-methylthiopentyl-1-phosphate (DK-MTP-1-P) into the intermediate 2-hydroxy-3-keto-5-methylthiopentenyl-1-phosphate (HK-MTPenyl-1-P), which is then dephosphorylated to form the acireductone 1,2-dihydroxy-3-keto-5-methylthiopentene (DHK-MTPene). The protein is Enolase-phosphatase E1 of Shewanella oneidensis (strain ATCC 700550 / JCM 31522 / CIP 106686 / LMG 19005 / NCIMB 14063 / MR-1).